Here is a 101-residue protein sequence, read N- to C-terminus: MQPKRSQAFVDTMHPLPEVLPSVWWHPGVSRRVSVHSGCFLSSHYLKPLGLSQPHARCLLRIAKRRLHEIINWNSRQAWKGACSSFRVSVARRTVHGSLFR.

This is an uncharacterized protein from Cupriavidus necator (strain ATCC 17699 / DSM 428 / KCTC 22496 / NCIMB 10442 / H16 / Stanier 337) (Ralstonia eutropha).